Here is a 377-residue protein sequence, read N- to C-terminus: Spermidine/putrescine import ATP-binding protein PotA (377 aa).

One can recognise an ABC transporter domain in the interval 18 to 248 (IRLSGISKSF…PKNLFVARFI (231 aa)). 50-57 (GPSGCGKT) serves as a coordination point for ATP.

This sequence belongs to the ABC transporter superfamily. Spermidine/putrescine importer (TC 3.A.1.11.1) family. As to quaternary structure, the complex is composed of two ATP-binding proteins (PotA), two transmembrane proteins (PotB and PotC) and a solute-binding protein (PotD).

Its subcellular location is the cell inner membrane. It carries out the reaction ATP + H2O + polyamine-[polyamine-binding protein]Side 1 = ADP + phosphate + polyamineSide 2 + [polyamine-binding protein]Side 1.. Its function is as follows. Part of the ABC transporter complex PotABCD involved in spermidine/putrescine import. Responsible for energy coupling to the transport system. This chain is Spermidine/putrescine import ATP-binding protein PotA, found in Vibrio vulnificus (strain CMCP6).